The following is a 389-amino-acid chain: Urotensin-2 receptor (389 aa).

2 stretches are compositionally biased toward polar residues: residues methionine 1–serine 10 and proline 28–proline 39. The interval methionine 1–proline 39 is disordered. Residues methionine 1–isoleucine 54 are Extracellular-facing. 2 N-linked (GlcNAc...) asparagine glycosylation sites follow: asparagine 29 and asparagine 33. A helical membrane pass occupies residues glycine 55–cysteine 77. Topologically, residues arginine 78 to tyrosine 87 are cytoplasmic. A helical transmembrane segment spans residues isoleucine 88–threonine 113. The Extracellular segment spans residues lysine 114 to arginine 124. A disulfide bond links cysteine 123 and cysteine 199. The helical transmembrane segment at valine 125–serine 146 threads the bilayer. Over glutamate 147–lysine 167 the chain is Cytoplasmic. A helical transmembrane segment spans residues leucine 168 to leucine 186. At alanine 187 to arginine 209 the chain is on the extracellular side. Residues alanine 210 to alanine 232 traverse the membrane as a helical segment. Over arginine 233–arginine 258 the chain is Cytoplasmic. The chain crosses the membrane as a helical span at residues leucine 259–arginine 284. Topologically, residues glutamate 285–asparagine 297 are extracellular. Residues tyrosine 298 to leucine 318 form a helical membrane-spanning segment. Over threonine 319 to alanine 389 the chain is Cytoplasmic. A disordered region spans residues glycine 328 to proline 366. Positions serine 355–proline 366 are enriched in polar residues.

Belongs to the G-protein coupled receptor 1 family.

It localises to the cell membrane. Functionally, high affinity receptor for urotensin-2 and urotensin-2B. The activity of this receptor is mediated by a G-protein that activate a phosphatidylinositol-calcium second messenger system. The chain is Urotensin-2 receptor (UTS2R) from Macaca mulatta (Rhesus macaque).